A 574-amino-acid chain; its full sequence is Proline--tRNA ligase (574 aa).

Belongs to the class-II aminoacyl-tRNA synthetase family. ProS type 1 subfamily. As to quaternary structure, homodimer.

It is found in the cytoplasm. The enzyme catalyses tRNA(Pro) + L-proline + ATP = L-prolyl-tRNA(Pro) + AMP + diphosphate. In terms of biological role, catalyzes the attachment of proline to tRNA(Pro) in a two-step reaction: proline is first activated by ATP to form Pro-AMP and then transferred to the acceptor end of tRNA(Pro). As ProRS can inadvertently accommodate and process non-cognate amino acids such as alanine and cysteine, to avoid such errors it has two additional distinct editing activities against alanine. One activity is designated as 'pretransfer' editing and involves the tRNA(Pro)-independent hydrolysis of activated Ala-AMP. The other activity is designated 'posttransfer' editing and involves deacylation of mischarged Ala-tRNA(Pro). The misacylated Cys-tRNA(Pro) is not edited by ProRS. The chain is Proline--tRNA ligase from Ralstonia nicotianae (strain ATCC BAA-1114 / GMI1000) (Ralstonia solanacearum).